The chain runs to 579 residues: Thiol:disulfide interchange protein DsbD (579 aa).

The N-terminal stretch at 1–16 (MKKLFLFFTLIFTAFA) is a signal peptide. 2 disulfide bridges follow: Cys124–Cys129 and Cys193–Cys315. The next 8 helical transmembrane spans lie at 178–198 (IFGF…LPML), 230–250 (LTYT…QIAL), 254–274 (YVMI…FGLF), 296–316 (GAFG…SPCT), 337–357 (AATL…ITLF), 376–396 (FGFV…PEVW), 397–417 (EPRL…LQMS), and 420–440 (GFGY…VQPL). The region spanning 449–579 (TTTQSAVENM…AFSNWLKALH (131 aa)) is the Thioredoxin domain. A disulfide bridge links Cys495 with Cys498.

Belongs to the thioredoxin family. DsbD subfamily.

The protein resides in the cell inner membrane. The catalysed reaction is [protein]-dithiol + NAD(+) = [protein]-disulfide + NADH + H(+). It carries out the reaction [protein]-dithiol + NADP(+) = [protein]-disulfide + NADPH + H(+). Its function is as follows. Required to facilitate the formation of correct disulfide bonds in some periplasmic proteins and for the assembly of the periplasmic c-type cytochromes. Acts by transferring electrons from cytoplasmic thioredoxin to the periplasm. This transfer involves a cascade of disulfide bond formation and reduction steps. The polypeptide is Thiol:disulfide interchange protein DsbD (Haemophilus influenzae (strain 86-028NP)).